Here is a 239-residue protein sequence, read N- to C-terminus: 1-(5-phosphoribosyl)-5-[(5-phosphoribosylamino)methylideneamino] imidazole-4-carboxamide isomerase (239 aa).

Asp-8 acts as the Proton acceptor in catalysis. The active-site Proton donor is Asp-129.

The protein belongs to the HisA/HisF family.

Its subcellular location is the cytoplasm. It catalyses the reaction 1-(5-phospho-beta-D-ribosyl)-5-[(5-phospho-beta-D-ribosylamino)methylideneamino]imidazole-4-carboxamide = 5-[(5-phospho-1-deoxy-D-ribulos-1-ylimino)methylamino]-1-(5-phospho-beta-D-ribosyl)imidazole-4-carboxamide. Its pathway is amino-acid biosynthesis; L-histidine biosynthesis; L-histidine from 5-phospho-alpha-D-ribose 1-diphosphate: step 4/9. The sequence is that of 1-(5-phosphoribosyl)-5-[(5-phosphoribosylamino)methylideneamino] imidazole-4-carboxamide isomerase from Legionella pneumophila subsp. pneumophila (strain Philadelphia 1 / ATCC 33152 / DSM 7513).